Here is a 333-residue protein sequence, read N- to C-terminus: Tryptophan--tRNA ligase (333 aa).

Residues Gln-11 to Ser-13 and Gly-19 to Asn-20 each bind ATP. Positions Pro-12–Asn-20 match the 'HIGH' region motif. Asp-135 is an L-tryptophan binding site. ATP contacts are provided by residues Gly-147–Asp-149, Val-186, and Lys-195–Ser-199. The 'KMSKS' region signature appears at Lys-195–Ser-199.

It belongs to the class-I aminoacyl-tRNA synthetase family. As to quaternary structure, homodimer.

Its subcellular location is the cytoplasm. The catalysed reaction is tRNA(Trp) + L-tryptophan + ATP = L-tryptophyl-tRNA(Trp) + AMP + diphosphate + H(+). Functionally, catalyzes the attachment of tryptophan to tRNA(Trp). This is Tryptophan--tRNA ligase from Pasteurella multocida (strain Pm70).